The following is a 404-amino-acid chain: Argininosuccinate synthase (404 aa).

ATP contacts are provided by residues 12-20 (AYSGGLDTS) and Ala40. The L-citrulline site is built by Tyr92 and Ser97. ATP is bound at residue Gly122. L-aspartate-binding residues include Thr124, Asn128, and Asp129. An L-citrulline-binding site is contributed by Asn128. Residues Arg132, Ser181, Ser190, Glu266, and Tyr278 each coordinate L-citrulline.

Belongs to the argininosuccinate synthase family. Type 1 subfamily. In terms of assembly, homotetramer.

It localises to the cytoplasm. The catalysed reaction is L-citrulline + L-aspartate + ATP = 2-(N(omega)-L-arginino)succinate + AMP + diphosphate + H(+). It functions in the pathway amino-acid biosynthesis; L-arginine biosynthesis; L-arginine from L-ornithine and carbamoyl phosphate: step 2/3. This is Argininosuccinate synthase from Photorhabdus laumondii subsp. laumondii (strain DSM 15139 / CIP 105565 / TT01) (Photorhabdus luminescens subsp. laumondii).